The following is a 308-amino-acid chain: Polyprenyl-phosphate transporter (308 aa).

The next 8 helical transmembrane spans lie at 15-35 (GLAM…IAFI), 69-89 (INGL…ATLA), 91-111 (LISW…FGLI), 130-150 (LLWL…KPLH), 163-183 (AIAI…LLLI), 200-220 (ILLI…HILS), 228-248 (DVTL…IWPW), and 282-302 (PSQW…VLGL).

It belongs to the PopT family.

It localises to the cell inner membrane. Its activity is regulated as follows. Active in alkaline conditions. Flippase that catalyzes the transport of undecaprenyl phosphate (UndP) across the cytoplasmic membrane, from the external side to the cytoplasmic side. Is involved in UndP recycling during peptidoglycan synthesis. Required for cell shape maintenance at alkaline pH and peptidoglycan maintenance. Required by the cholera pathogen for growth and cell shape maintenance in the intestine. This is Polyprenyl-phosphate transporter from Vibrio cholerae serotype O1 (strain ATCC 39315 / El Tor Inaba N16961).